A 414-amino-acid chain; its full sequence is Glucose-1-phosphate adenylyltransferase (414 aa).

Alpha-D-glucose 1-phosphate contacts are provided by residues Y103, G168, 183–184, and S201; that span reads EK.

Belongs to the bacterial/plant glucose-1-phosphate adenylyltransferase family. As to quaternary structure, homotetramer.

It carries out the reaction alpha-D-glucose 1-phosphate + ATP + H(+) = ADP-alpha-D-glucose + diphosphate. It functions in the pathway glycan biosynthesis; glycogen biosynthesis. In terms of biological role, involved in the biosynthesis of ADP-glucose, a building block required for the elongation reactions to produce glycogen. Catalyzes the reaction between ATP and alpha-D-glucose 1-phosphate (G1P) to produce pyrophosphate and ADP-Glc. In Thermus thermophilus (strain ATCC 27634 / DSM 579 / HB8), this protein is Glucose-1-phosphate adenylyltransferase.